A 475-amino-acid chain; its full sequence is Ribulose bisphosphate carboxylase large chain (475 aa).

Lysine 14 is modified (N6,N6,N6-trimethyllysine). 2 residues coordinate substrate: asparagine 123 and threonine 173. Lysine 175 serves as the catalytic Proton acceptor. Lysine 177 serves as a coordination point for substrate. Mg(2+)-binding residues include lysine 201, aspartate 203, and glutamate 204. An N6-carboxylysine modification is found at lysine 201. Histidine 294 (proton acceptor) is an active-site residue. Positions 295, 327, and 379 each coordinate substrate.

Belongs to the RuBisCO large chain family. Type I subfamily. As to quaternary structure, heterohexadecamer of 8 large chains and 8 small chains; disulfide-linked. The disulfide link is formed within the large subunit homodimers. Mg(2+) is required as a cofactor. The disulfide bond which can form in the large chain dimeric partners within the hexadecamer appears to be associated with oxidative stress and protein turnover.

The protein localises to the plastid. Its subcellular location is the chloroplast. It catalyses the reaction 2 (2R)-3-phosphoglycerate + 2 H(+) = D-ribulose 1,5-bisphosphate + CO2 + H2O. The enzyme catalyses D-ribulose 1,5-bisphosphate + O2 = 2-phosphoglycolate + (2R)-3-phosphoglycerate + 2 H(+). Functionally, ruBisCO catalyzes two reactions: the carboxylation of D-ribulose 1,5-bisphosphate, the primary event in carbon dioxide fixation, as well as the oxidative fragmentation of the pentose substrate in the photorespiration process. Both reactions occur simultaneously and in competition at the same active site. In Actinidia chinensis (Kiwi), this protein is Ribulose bisphosphate carboxylase large chain.